Here is a 465-residue protein sequence, read N- to C-terminus: Chromosomal replication initiator protein DnaA (465 aa).

The tract at residues 1 to 87 (MLWTDCLTRL…RPGSILSSSE (87 aa)) is domain I, interacts with DnaA modulators. The tract at residues 81-123 (SILSSSEQPATTTAALQTAPIPQPAKVKREPEPVANTAVSSKS) is disordered. The span at 88–100 (QPATTTAALQTAP) shows a compositional bias: low complexity. A domain II region spans residues 88-127 (QPATTTAALQTAPIPQPAKVKREPEPVANTAVSSKSSKKK). The segment at 128–345 (LLNPQFTFSL…GALNKVVAIS (218 aa)) is domain III, AAA+ region. Glycine 173, glycine 175, lysine 176, and threonine 177 together coordinate ATP. The domain IV, binds dsDNA stretch occupies residues 346–465 (RFKGAPIDLD…YKNLLRLLQS (120 aa)).

Belongs to the DnaA family. Oligomerizes as a right-handed, spiral filament on DNA at oriC.

The protein localises to the cytoplasm. Functionally, plays an essential role in the initiation and regulation of chromosomal replication. ATP-DnaA binds to the origin of replication (oriC) to initiate formation of the DNA replication initiation complex once per cell cycle. Binds the DnaA box (a 9 base pair repeat at the origin) and separates the double-stranded (ds)DNA. Forms a right-handed helical filament on oriC DNA; dsDNA binds to the exterior of the filament while single-stranded (ss)DNA is stabiized in the filament's interior. The ATP-DnaA-oriC complex binds and stabilizes one strand of the AT-rich DNA unwinding element (DUE), permitting loading of DNA polymerase. After initiation quickly degrades to an ADP-DnaA complex that is not apt for DNA replication. Binds acidic phospholipids. This chain is Chromosomal replication initiator protein DnaA, found in Acinetobacter baumannii (strain AB307-0294).